A 314-amino-acid polypeptide reads, in one-letter code: tRNA-cytidine(32) 2-sulfurtransferase (314 aa).

A PP-loop motif motif is present at residues 49-54 (SGGKDS). C124, C127, and C215 together coordinate [4Fe-4S] cluster.

The protein belongs to the TtcA family. As to quaternary structure, homodimer. Requires Mg(2+) as cofactor. [4Fe-4S] cluster serves as cofactor.

The protein localises to the cytoplasm. It carries out the reaction cytidine(32) in tRNA + S-sulfanyl-L-cysteinyl-[cysteine desulfurase] + AH2 + ATP = 2-thiocytidine(32) in tRNA + L-cysteinyl-[cysteine desulfurase] + A + AMP + diphosphate + H(+). The protein operates within tRNA modification. Its function is as follows. Catalyzes the ATP-dependent 2-thiolation of cytidine in position 32 of tRNA, to form 2-thiocytidine (s(2)C32). The sulfur atoms are provided by the cysteine/cysteine desulfurase (IscS) system. This Pasteurella multocida (strain Pm70) protein is tRNA-cytidine(32) 2-sulfurtransferase.